We begin with the raw amino-acid sequence, 319 residues long: Thioredoxin reductase (319 aa).

An FAD-binding site is contributed by 37–44 (ERGVPGGQ). C136 and C139 are disulfide-bonded. An FAD-binding site is contributed by 279–288 (DVRAKSLRQI).

Belongs to the class-II pyridine nucleotide-disulfide oxidoreductase family. Homodimer. FAD is required as a cofactor.

Its subcellular location is the cytoplasm. The catalysed reaction is [thioredoxin]-dithiol + NADP(+) = [thioredoxin]-disulfide + NADPH + H(+). This Listeria innocua serovar 6a (strain ATCC BAA-680 / CLIP 11262) protein is Thioredoxin reductase (trxB).